We begin with the raw amino-acid sequence, 250 residues long: Eukaryotic translation initiation factor 3 subunit K (250 aa).

The PCI domain occupies 46–229; the sequence is FDCYANLALL…KENEARSEVK (184 aa).

It belongs to the eIF-3 subunit K family. In terms of assembly, component of the eukaryotic translation initiation factor 3 (eIF-3) complex.

The protein localises to the cytoplasm. In terms of biological role, component of the eukaryotic translation initiation factor 3 (eIF-3) complex, which is involved in protein synthesis of a specialized repertoire of mRNAs and, together with other initiation factors, stimulates binding of mRNA and methionyl-tRNAi to the 40S ribosome. The eIF-3 complex specifically targets and initiates translation of a subset of mRNAs involved in cell proliferation. The sequence is that of Eukaryotic translation initiation factor 3 subunit K from Emericella nidulans (strain FGSC A4 / ATCC 38163 / CBS 112.46 / NRRL 194 / M139) (Aspergillus nidulans).